Consider the following 341-residue polypeptide: HMG box-containing protein C10F6.08c (341 aa).

Residues 68–77 show a composition bias toward basic and acidic residues; that stretch reads SEAKSREFGQ. Disordered stretches follow at residues 68-195 and 236-341; these read SEAK…SNAK and LTEE…SSNA. Composition is skewed to polar residues over residues 116 to 157 and 165 to 177; these read DTNV…QVVQ and NTDP…ITNL. Residues 178 to 195 are compositionally biased toward low complexity; sequence KTESSKSSGAKKATSNAK. The HMG box DNA-binding region spans 195–263; it reads KITDTMLFNH…KAREARRRRS (69 aa). 2 stretches are compositionally biased toward basic and acidic residues: residues 238-256 and 269-304; these read EEEK…EKAR and KLEK…GQKE. Residues Thr314 and Thr315 each carry the phosphothreonine modification. The residue at position 316 (Ser316) is a Phosphoserine.

Its subcellular location is the nucleus. The polypeptide is HMG box-containing protein C10F6.08c (Schizosaccharomyces pombe (strain 972 / ATCC 24843) (Fission yeast)).